Reading from the N-terminus, the 187-residue chain is 1,6-anhydro-N-acetylmuramyl-L-alanine amidase AmpD (187 aa).

The N-acetylmuramoyl-L-alanine amidase domain maps to 29–167 (TLLVVHNISL…APERKTDPGP (139 aa)). His-34 serves as a coordination point for Zn(2+). Residue Glu-116 is the Proton acceptor of the active site. The Zn(2+) site is built by His-154 and Asp-164.

The protein belongs to the N-acetylmuramoyl-L-alanine amidase 2 family. The cofactor is Zn(2+).

It localises to the cytoplasm. The catalysed reaction is Hydrolyzes the link between N-acetylmuramoyl residues and L-amino acid residues in certain cell-wall glycopeptides.. Its function is as follows. Involved in cell wall peptidoglycan recycling. Specifically cleaves the amide bond between the lactyl group of N-acetylmuramic acid and the alpha-amino group of the L-alanine in degradation products containing an anhydro N-acetylmuramyl moiety. This is 1,6-anhydro-N-acetylmuramyl-L-alanine amidase AmpD from Enterobacter cloacae.